We begin with the raw amino-acid sequence, 258 residues long: Protein T1 (258 aa).

Positions 1–17 (MRRLCIILLVYVYATFA) are cleaved as a signal peptide. Residues asparagine 67, asparagine 151, and asparagine 172 are each glycosylated (N-linked (GlcNAc...) asparagine; by host).

The protein belongs to the poxviruses A41 family.

This chain is Protein T1, found in Rabbit fibroma virus (strain Kasza) (RFV).